A 262-amino-acid chain; its full sequence is MFINLNPLEQFSVYSATSAILGSSSNSLAITSLTNIAILFIIGLLVLTIFQISASSHLIKPTRWNIVLETWVASILGIVKDQIGNDAKNSLIYFPLIFTFFSFVFISNILGMIPYSFTPTSHISVTLGLSIAIMIGVTLIGFSKHQLDFFSLFVPKGTPLALVPLLVLIEFISYSARAFSLALRLTANVSAGHCLFGVISALSVSACIAVSSLLLKGITITLPLAVLVVLYGLELLVALLQSYVFTLLTCSYLADVVNMGDH.

The next 7 helical transmembrane spans lie at Ile30–Phe50, Trp64–Gly84, Leu91–Gly111, Ile123–Ser143, Phe149–Ile169, Leu195–Leu215, and Ile220–Leu240.

It belongs to the ATPase A chain family. As to quaternary structure, F-type ATPases have 2 components, CF(1) - the catalytic core - and CF(0) - the membrane proton channel. CF(1) has five subunits: alpha(3), beta(3), gamma(1), delta(1), epsilon(1). CF(0) has three main subunits: a, b and c.

Its subcellular location is the mitochondrion inner membrane. Its function is as follows. Mitochondrial membrane ATP synthase (F(1)F(0) ATP synthase or Complex V) produces ATP from ADP in the presence of a proton gradient across the membrane which is generated by electron transport complexes of the respiratory chain. F-type ATPases consist of two structural domains, F(1) - containing the extramembraneous catalytic core and F(0) - containing the membrane proton channel, linked together by a central stalk and a peripheral stalk. During catalysis, ATP synthesis in the catalytic domain of F(1) is coupled via a rotary mechanism of the central stalk subunits to proton translocation. Key component of the proton channel; it may play a direct role in the translocation of protons across the membrane. In Allomyces macrogynus, this protein is ATP synthase subunit a (ATP6).